A 441-amino-acid polypeptide reads, in one-letter code: MMMMRGGERVKEFLRPFVDSRTWDLCVIWKLGDDPSRFIEWVGCCCSGCYIDKNIKLENSEEGGTGRKKKASFCRDDHNKHRIRTLACEALSRFPLFMPLYPGIHGEVVMSKSPKWLVNSGSKMEMFSTRVLVPVSDGLVELFAFDMRPFDESMVHLIMSRCTTFFEPFPEQRLQFRIIPRAEESMSSGVNLSVEGGGSSSVSNPSSETQNLFGNYPNASCVEILREEQTPCLIMNKEKDVVVQNANDSKANKKLLPTENFKSKNLHSERKRRERINQAMYGLRAVVPKITKLNKIGIFSDAVDYINELLVEKQKLEDELKGINEMECKEIAAEEQSAIADPEAERVSSKSNKRVKKNEVKIEVHETGERDFLIRVVQEHKQDGFKRLIEAVDLCELEIIDVNFTRLDLTVMTVLNVKANKDGIACGILRDLLLKMMITSI.

Positions 260-309 constitute a bHLH domain; the sequence is NFKSKNLHSERKRRERINQAMYGLRAVVPKITKLNKIGIFSDAVDYINEL.

In terms of assembly, homodimer. In terms of tissue distribution, expressed constitutively in roots, leaves, stems, and flowers.

It localises to the nucleus. In Arabidopsis thaliana (Mouse-ear cress), this protein is Transcription factor bHLH90 (BHLH90).